Consider the following 410-residue polypeptide: Testis-specific Y-encoded-like protein 6 (410 aa).

Disordered regions lie at residues 1–31 (MSLP…EKSK) and 46–69 (PIVF…DGGH). Ser9 carries the post-translational modification Phosphoserine. The segment covering 18-31 (EDPHQGQRSREKSK) has biased composition (basic and acidic residues).

The protein belongs to the nucleosome assembly protein (NAP) family.

The protein is Testis-specific Y-encoded-like protein 6 (TSPYL6) of Homo sapiens (Human).